The sequence spans 961 residues: Integrator complex subunit 7 (961 aa).

The span at 937–955 shows a compositional bias: low complexity; the sequence is QVRLQQQQGQPPSQQQQQR. The segment at 937-961 is disordered; it reads QVRLQQQQGQPPSQQQQQRTAYSRF.

This sequence belongs to the Integrator subunit 7 family. As to quaternary structure, component of the Integrator complex, composed of core subunits INTS1, INTS2, INTS3, INTS4, INTS5, INTS6, INTS7, INTS8, INTS9/RC74, INTS10, INTS11/CPSF3L, INTS12, INTS13, INTS14 and INTS15. The core complex associates with protein phosphatase 2A subunits PPP2CA and PPP2R1A, to form the Integrator-PP2A (INTAC) complex.

It localises to the nucleus. Its subcellular location is the chromosome. The protein resides in the cytoplasm. Component of the integrator complex, a multiprotein complex that terminates RNA polymerase II (Pol II) transcription in the promoter-proximal region of genes. The integrator complex provides a quality checkpoint during transcription elongation by driving premature transcription termination of transcripts that are unfavorably configured for transcriptional elongation: the complex terminates transcription by (1) catalyzing dephosphorylation of the C-terminal domain (CTD) of Pol II subunit POLR2A/RPB1 and SUPT5H/SPT5, (2) degrading the exiting nascent RNA transcript via endonuclease activity and (3) promoting the release of Pol II from bound DNA. The integrator complex is also involved in terminating the synthesis of non-coding Pol II transcripts, such as enhancer RNAs (eRNAs), small nuclear RNAs (snRNAs), telomerase RNAs and long non-coding RNAs (lncRNAs). The polypeptide is Integrator complex subunit 7 (INTS7) (Gallus gallus (Chicken)).